We begin with the raw amino-acid sequence, 274 residues long: NH(3)-dependent NAD(+) synthetase (274 aa).

46 to 53 lines the ATP pocket; that stretch reads GISGGQDS. Asp52 contacts Mg(2+). Arg140 contributes to the deamido-NAD(+) binding site. Thr160 contributes to the ATP binding site. Glu165 serves as a coordination point for Mg(2+). Lys173 and Asp180 together coordinate deamido-NAD(+). ATP is bound by residues Lys189 and Thr211. 260–261 contributes to the deamido-NAD(+) binding site; it reads HK.

It belongs to the NAD synthetase family. In terms of assembly, homodimer.

The catalysed reaction is deamido-NAD(+) + NH4(+) + ATP = AMP + diphosphate + NAD(+) + H(+). Its pathway is cofactor biosynthesis; NAD(+) biosynthesis; NAD(+) from deamido-NAD(+) (ammonia route): step 1/1. Catalyzes the ATP-dependent amidation of deamido-NAD to form NAD. Uses ammonia as a nitrogen source. In Lysinibacillus sphaericus (strain C3-41), this protein is NH(3)-dependent NAD(+) synthetase.